The following is a 136-amino-acid chain: Large ribosomal subunit protein eL27 (136 aa).

The KOW domain maps to 5-40 (MKPGKVVLVLAGRYSGRKAVIVKNIDDGTSDRPYSH). N6-acetyllysine occurs at positions 27 and 93.

This sequence belongs to the eukaryotic ribosomal protein eL27 family. As to quaternary structure, component of the large ribosomal subunit. Interacts with RRP1B. Component of the large ribosomal subunit. Interacts with RRP1B. Interacts with DHX33.

It localises to the cytoplasm. Its subcellular location is the cytosol. The protein resides in the rough endoplasmic reticulum. Functionally, component of the large ribosomal subunit. Required for proper rRNA processing and maturation of 28S and 5.8S rRNAs. This is Large ribosomal subunit protein eL27 (RPL27) from Canis lupus familiaris (Dog).